Here is a 452-residue protein sequence, read N- to C-terminus: Pup--protein ligase (452 aa).

A Mg(2+)-binding site is contributed by glutamate 9. Residue arginine 53 coordinates ATP. Tyrosine 55 contacts Mg(2+). The active-site Proton acceptor is aspartate 57. Glutamate 63 is a binding site for Mg(2+). Residues threonine 66 and tryptophan 419 each contribute to the ATP site.

Belongs to the Pup ligase/Pup deamidase family. Pup-conjugating enzyme subfamily.

It catalyses the reaction ATP + [prokaryotic ubiquitin-like protein]-L-glutamate + [protein]-L-lysine = ADP + phosphate + N(6)-([prokaryotic ubiquitin-like protein]-gamma-L-glutamyl)-[protein]-L-lysine.. It participates in protein degradation; proteasomal Pup-dependent pathway. Its pathway is protein modification; protein pupylation. Its function is as follows. Catalyzes the covalent attachment of the prokaryotic ubiquitin-like protein modifier Pup to the proteasomal substrate proteins, thereby targeting them for proteasomal degradation. This tagging system is termed pupylation. The ligation reaction involves the side-chain carboxylate of the C-terminal glutamate of Pup and the side-chain amino group of a substrate lysine. The chain is Pup--protein ligase from Mycobacterium ulcerans (strain Agy99).